Reading from the N-terminus, the 477-residue chain is Protoporphyrinogen oxidase (477 aa).

FAD contacts are provided by residues 9-14, tryptophan 42, 57-60, valine 257, alanine 449, and 454-456; these read GGGISG, GPRG, and VAV.

The protein belongs to the protoporphyrinogen/coproporphyrinogen oxidase family. Protoporphyrinogen oxidase subfamily. As to quaternary structure, monomer. Homodimer. FAD is required as a cofactor.

The protein localises to the mitochondrion inner membrane. The catalysed reaction is protoporphyrinogen IX + 3 O2 = protoporphyrin IX + 3 H2O2. The protein operates within porphyrin-containing compound metabolism; protoporphyrin-IX biosynthesis; protoporphyrin-IX from protoporphyrinogen-IX: step 1/1. With respect to regulation, inhibited by acifluorfen. In terms of biological role, catalyzes the 6-electron oxidation of protoporphyrinogen-IX to form protoporphyrin-IX. This is Protoporphyrinogen oxidase (Ppox) from Mus musculus (Mouse).